The chain runs to 123 residues: MAKPSYVKFEVPKELAEKALQAVEIARDTGKIRKGTNETTKAVERGQAKLVIIAEDVDPEEIVAHLPPLCEEKEIPYIYVPSKKELGAAAGIEVAAASVAIIEPGKARDLVEEIAMKVKELMK.

Belongs to the eukaryotic ribosomal protein eL8 family. May be present in up to 3 copies per 70S ribosome. Part of the 50S ribosomal subunit, where it binds 23S rRNA at its canonical site near the L1 stalk, as well as a possible second 50S binding site near helix 25 and a possible third site on the beak of the 30S subunit. Component of box C/D small ribonucleoprotein (sRNP) particles that contain rpl7ae, FlpA and nop5, plus a guide RNA. These sRNP particles form homodimers, giving rise to an asymmetric holoenzyme. Probably part of the RNase P complex.

The protein resides in the cytoplasm. Multifunctional RNA-binding protein that recognizes the K-turn motif in ribosomal RNA, the RNA component of RNase P, box H/ACA, box C/D and box C'/D' sRNAs. Component of the 70S ribosome. Component of a box C/D small ribonucleoprotein (sRNP) particle that is involved in pre-rRNA and tRNA processing. Utilizes the methyl donor S-adenosyl-L-methionine to catalyze the site-specific 2'-hydroxyl methylation of ribose moieties in rRNA and tRNA. Site specificity is provided by a guide RNA that base pairs with the substrate. Methylation occurs at a characteristic distance from the sequence involved in base pairing with the guide RNA. This chain is Large ribosomal subunit protein eL8, found in Pyrococcus furiosus (strain ATCC 43587 / DSM 3638 / JCM 8422 / Vc1).